A 58-amino-acid chain; its full sequence is uncharacterized protein (58 aa).

A coiled-coil region spans residues Lys-3–Lys-52.

This is an uncharacterized protein from Archaeoglobus fulgidus (strain ATCC 49558 / DSM 4304 / JCM 9628 / NBRC 100126 / VC-16).